A 346-amino-acid chain; its full sequence is Carbamoyl phosphate synthase small chain (346 aa).

The tract at residues Met1–Glu160 is CPSase. L-glutamine-binding residues include Ser39, Gly209, and Gly211. The Glutamine amidotransferase type-1 domain maps to Cys164–His346. The Nucleophile role is filled by Cys237. Residues Leu238, Gln241, Asn280, Gly282, and Tyr283 each contribute to the L-glutamine site. Catalysis depends on residues His320 and Glu322.

This sequence belongs to the CarA family. Composed of two chains; the small (or glutamine) chain promotes the hydrolysis of glutamine to ammonia, which is used by the large (or ammonia) chain to synthesize carbamoyl phosphate. Tetramer of heterodimers (alpha,beta)4.

It catalyses the reaction hydrogencarbonate + L-glutamine + 2 ATP + H2O = carbamoyl phosphate + L-glutamate + 2 ADP + phosphate + 2 H(+). The enzyme catalyses L-glutamine + H2O = L-glutamate + NH4(+). It functions in the pathway amino-acid biosynthesis; L-arginine biosynthesis; carbamoyl phosphate from bicarbonate: step 1/1. It participates in pyrimidine metabolism; UMP biosynthesis via de novo pathway; (S)-dihydroorotate from bicarbonate: step 1/3. In terms of biological role, small subunit of the glutamine-dependent carbamoyl phosphate synthetase (CPSase). CPSase catalyzes the formation of carbamoyl phosphate from the ammonia moiety of glutamine, carbonate, and phosphate donated by ATP, constituting the first step of 2 biosynthetic pathways, one leading to arginine and/or urea and the other to pyrimidine nucleotides. The small subunit (glutamine amidotransferase) binds and cleaves glutamine to supply the large subunit with the substrate ammonia. The polypeptide is Carbamoyl phosphate synthase small chain (Pyrobaculum aerophilum (strain ATCC 51768 / DSM 7523 / JCM 9630 / CIP 104966 / NBRC 100827 / IM2)).